A 476-amino-acid chain; its full sequence is Methylenetetrahydrofolate--tRNA-(uracil-5-)-methyltransferase TrmFO (476 aa).

Residue 13–18 coordinates FAD; it reads GGGLAG. Residues 425–446 are disordered; that stretch reads PPLESPPTHGADGKKLRGPDKT. Basic and acidic residues predominate over residues 435–446; sequence ADGKKLRGPDKT.

It belongs to the MnmG family. TrmFO subfamily. FAD is required as a cofactor.

The protein resides in the cytoplasm. The enzyme catalyses uridine(54) in tRNA + (6R)-5,10-methylene-5,6,7,8-tetrahydrofolate + NADH + H(+) = 5-methyluridine(54) in tRNA + (6S)-5,6,7,8-tetrahydrofolate + NAD(+). It catalyses the reaction uridine(54) in tRNA + (6R)-5,10-methylene-5,6,7,8-tetrahydrofolate + NADPH + H(+) = 5-methyluridine(54) in tRNA + (6S)-5,6,7,8-tetrahydrofolate + NADP(+). Functionally, catalyzes the folate-dependent formation of 5-methyl-uridine at position 54 (M-5-U54) in all tRNAs. In Rhodopseudomonas palustris (strain BisB18), this protein is Methylenetetrahydrofolate--tRNA-(uracil-5-)-methyltransferase TrmFO.